Here is a 437-residue protein sequence, read N- to C-terminus: ATP-dependent protease ATPase subunit HslU (437 aa).

ATP-binding positions include Val18, 60–65 (GCGKTE), Asp250, Glu315, and Arg387.

This sequence belongs to the ClpX chaperone family. HslU subfamily. A double ring-shaped homohexamer of HslV is capped on each side by a ring-shaped HslU homohexamer. The assembly of the HslU/HslV complex is dependent on binding of ATP.

The protein localises to the cytoplasm. Functionally, ATPase subunit of a proteasome-like degradation complex; this subunit has chaperone activity. The binding of ATP and its subsequent hydrolysis by HslU are essential for unfolding of protein substrates subsequently hydrolyzed by HslV. HslU recognizes the N-terminal part of its protein substrates and unfolds these before they are guided to HslV for hydrolysis. This chain is ATP-dependent protease ATPase subunit HslU, found in Methylobacterium nodulans (strain LMG 21967 / CNCM I-2342 / ORS 2060).